Here is a 199-residue protein sequence, read N- to C-terminus: NAD(P)H dehydrogenase (quinone) (199 aa).

The 187-residue stretch at 4-190 (VLVLYYSAYG…AGARYQGKTI (187 aa)) folds into the Flavodoxin-like domain. FMN-binding positions include 10–15 (SAYGHI) and 78–80 (TRF). Y12 contacts NAD(+). Substrate is bound at residue W98. Residues 113–119 (STATQHG) and H134 each bind FMN.

Belongs to the WrbA family. Requires FMN as cofactor.

It catalyses the reaction a quinone + NADH + H(+) = a quinol + NAD(+). It carries out the reaction a quinone + NADPH + H(+) = a quinol + NADP(+). The protein is NAD(P)H dehydrogenase (quinone) of Rhodopseudomonas palustris (strain BisB5).